The following is a 292-amino-acid chain: tRNA (guanine-N(1)-)-methyltransferase (292 aa).

Residues glycine 151 and 175 to 180 (IGDYVL) each bind S-adenosyl-L-methionine.

This sequence belongs to the RNA methyltransferase TrmD family. Homodimer.

Its subcellular location is the cytoplasm. It carries out the reaction guanosine(37) in tRNA + S-adenosyl-L-methionine = N(1)-methylguanosine(37) in tRNA + S-adenosyl-L-homocysteine + H(+). In terms of biological role, specifically methylates guanosine-37 in various tRNAs. The chain is tRNA (guanine-N(1)-)-methyltransferase from Corynebacterium diphtheriae (strain ATCC 700971 / NCTC 13129 / Biotype gravis).